The sequence spans 185 residues: Large ribosomal subunit protein eL19 (185 aa).

A disordered region spans residues 152-185; it reads SDKLTSQQEARRAKNTASRAKRNEKAQIVAKVDV.

It belongs to the eukaryotic ribosomal protein eL19 family.

The chain is Large ribosomal subunit protein eL19 (RPL19) from Tetrahymena thermophila (strain SB210).